The following is a 332-amino-acid chain: Glyceraldehyde-3-phosphate dehydrogenase (332 aa).

NAD(+) contacts are provided by residues 10–11, D36, K81, and S116; that span reads RI. Residues 150-152, T181, R197, 210-211, and R233 contribute to the D-glyceraldehyde 3-phosphate site; these read SCT and TK. C151 (nucleophile) is an active-site residue. Residue N314 participates in NAD(+) binding.

Belongs to the glyceraldehyde-3-phosphate dehydrogenase family. Homotetramer.

Its subcellular location is the cytoplasm. The catalysed reaction is D-glyceraldehyde 3-phosphate + phosphate + NAD(+) = (2R)-3-phospho-glyceroyl phosphate + NADH + H(+). The protein operates within carbohydrate degradation; glycolysis; pyruvate from D-glyceraldehyde 3-phosphate: step 1/5. Catalyzes the oxidative phosphorylation of glyceraldehyde 3-phosphate (G3P) to 1,3-bisphosphoglycerate (BPG) using the cofactor NAD. The first reaction step involves the formation of a hemiacetal intermediate between G3P and a cysteine residue, and this hemiacetal intermediate is then oxidized to a thioester, with concomitant reduction of NAD to NADH. The reduced NADH is then exchanged with the second NAD, and the thioester is attacked by a nucleophilic inorganic phosphate to produce BPG. The protein is Glyceraldehyde-3-phosphate dehydrogenase (gapA) of Helicobacter pylori (strain J99 / ATCC 700824) (Campylobacter pylori J99).